The following is a 409-amino-acid chain: F-box/kelch-repeat protein At2g44130 (409 aa).

The region spanning 17-63 is the F-box domain; sequence HELIPGLPSELALECLVRVPFQFQSAMRSVCRSWRSLLSDSSFIQER. Kelch repeat units lie at residues 98–148, 151–199, 201–248, and 251–300; these read KKSE…VLQD, KILL…SVSP, KVYV…AVGM, and RFCV…RTAG.

The polypeptide is F-box/kelch-repeat protein At2g44130 (Arabidopsis thaliana (Mouse-ear cress)).